The sequence spans 202 residues: Peptidyl-tRNA hydrolase (202 aa).

Tyr-16 contributes to the tRNA binding site. The active-site Proton acceptor is the His-21. 3 residues coordinate tRNA: Tyr-68, Asn-70, and Asn-116.

This sequence belongs to the PTH family. In terms of assembly, monomer.

It localises to the cytoplasm. It catalyses the reaction an N-acyl-L-alpha-aminoacyl-tRNA + H2O = an N-acyl-L-amino acid + a tRNA + H(+). Functionally, hydrolyzes ribosome-free peptidyl-tRNAs (with 1 or more amino acids incorporated), which drop off the ribosome during protein synthesis, or as a result of ribosome stalling. Catalyzes the release of premature peptidyl moieties from peptidyl-tRNA molecules trapped in stalled 50S ribosomal subunits, and thus maintains levels of free tRNAs and 50S ribosomes. This is Peptidyl-tRNA hydrolase from Treponema pallidum (strain Nichols).